The following is a 174-amino-acid chain: RNA pyrophosphohydrolase (174 aa).

In terms of domain architecture, Nudix hydrolase spans 6-149 (GYRPNVGIVI…KRDVYRRALK (144 aa)). Residues 38–59 (GGIDEGETPEQAMYRELYEEVG) carry the Nudix box motif.

The protein belongs to the Nudix hydrolase family. RppH subfamily. Requires a divalent metal cation as cofactor.

Functionally, accelerates the degradation of transcripts by removing pyrophosphate from the 5'-end of triphosphorylated RNA, leading to a more labile monophosphorylated state that can stimulate subsequent ribonuclease cleavage. This Photobacterium profundum (strain SS9) protein is RNA pyrophosphohydrolase.